The sequence spans 190 residues: Small ribosomal subunit protein uS4 (190 aa).

The 77-residue stretch at 105 to 181 (RRLQTLVYKL…RKKAKAAEGG (77 aa)) folds into the S4 RNA-binding domain. The interval 163-190 (GGGRPGRVRRKKAKAAEGGDGDAEEDEE) is disordered. The segment covering 181 to 190 (GDGDAEEDEE) has biased composition (acidic residues).

This sequence belongs to the universal ribosomal protein uS4 family.

This Podospora anserina (Pleurage anserina) protein is Small ribosomal subunit protein uS4 (RPS9).